The primary structure comprises 219 residues: uncharacterized protein (219 aa).

A helical transmembrane segment spans residues 28–50 (IVSSLIAGGYALFVSAFTSYVYT). The stretch at 155-218 (EILRESLSEI…EEIEKELEFF (64 aa)) forms a coiled coil.

Its subcellular location is the membrane. This is an uncharacterized protein from Aquifex aeolicus (strain VF5).